Reading from the N-terminus, the 437-residue chain is Zinc finger protein 491 (437 aa).

Residues 35-59 (KSCESGTCGEIFMGYSSFNRNIRTD) form a C2H2-type 1; degenerate zinc finger. The C2H2-type 2; degenerate zinc finger occupies 103 to 125 (FDCKECEKSFISPASIRRYMVTH). 11 consecutive C2H2-type zinc fingers follow at residues 131–153 (YKCKFCGKALDCLSLYLTHERTH), 159–181 (YECKQCGKAFSWHSSVRIHERTH), 187–209 (YECKECGKSFNFSSSFRRHERTH), 215–237 (YKCKECGKAFNCPSSFHRHERTH), 243–265 (YECKLYGKALSRLISFRRHMRMH), 271–293 (HKCKICGKAFYSPSSFQRHERSH), 299–321 (YKCKQCGKAFTCSTSFQYHERTH), 327–349 (DGCKQCGKAFRSAKYIRIHGRTH), 355–377 (YECKQCGKAFHCVSSFHRHERTH), 383–405 (YECKHCGKAFTCSIYIRIHERIH), and 411–433 (YQCKECGKAFIRSSYCRKHERTH).

Belongs to the krueppel C2H2-type zinc-finger protein family.

The protein resides in the nucleus. In terms of biological role, may be involved in transcriptional regulation. The polypeptide is Zinc finger protein 491 (ZNF491) (Homo sapiens (Human)).